The chain runs to 180 residues: Ribulose bisphosphate carboxylase small subunit, chloroplastic 2 (180 aa).

Residues 1 to 56 (MASSVISSAAVATRSNVTQASMVAPFTGLKSSATFPVTKKQNLDITSIASNGGRVS) constitute a chloroplast transit peptide.

Belongs to the RuBisCO small chain family. In terms of assembly, heterohexadecamer of 8 large and 8 small subunits. (Microbial infection) Binds to tobamovirus movement protein; this interaction seems required for viral systemic movement.

The protein resides in the plastid. It localises to the chloroplast. Its subcellular location is the cell junction. It is found in the plasmodesma. RuBisCO catalyzes two reactions: the carboxylation of D-ribulose 1,5-bisphosphate, the primary event in carbon dioxide fixation, as well as the oxidative fragmentation of the pentose substrate. Both reactions occur simultaneously and in competition at the same active site. Although the small subunit is not catalytic it is essential for maximal activity. Involved in antiviral defenses. This is Ribulose bisphosphate carboxylase small subunit, chloroplastic 2 from Solanum lycopersicum (Tomato).